Consider the following 531-residue polypeptide: Ceramide kinase (531 aa).

Positions 1–115 are essential for enzyme activity; it reads MGAMGAAEPL…SADEQLCHLW (115 aa). Positions 1 to 125 are required for binding to sulfatide and phosphoinositides; it reads MGAMGAAEPL…LQTLRGLLES (125 aa). Residues 128–278 enclose the DAGKc domain; that stretch reads SRPKHLLVFI…IDVSSVHYHN (151 aa). ATP contacts are provided by residues 138–140 and 170–174; these read NPF and TEHAN. 195–198 is a binding site for substrate; the sequence is GGDG. Residue Asp197 is the Proton donor/acceptor of the active site. ATP contacts are provided by residues Glu202, 239-241, Arg304, and Arg310; that span reads GST. Ser340 and Ser408 each carry phosphoserine. 502–504 is a binding site for ATP; the sequence is DGE.

It depends on Ca(2+) as a cofactor. The cofactor is Mg(2+). High level expression in heart, brain, testis and pancreas; low expression in spleen, liver and lung; not detected in skeletal muscle.

The protein localises to the cytoplasm. The protein resides in the cell membrane. The enzyme catalyses an N-acylsphing-4-enine + ATP = an N-acylsphing-4-enine 1-phosphate + ADP + H(+). It catalyses the reaction N-(hexanoyl)sphing-4-enine + ATP = N-hexanoylsphing-4-enine 1-phosphate + ADP + H(+). It carries out the reaction N-(acetyl)-sphing-4-enine + ATP = N-(acetyl)-sphing-4-enine-1-phosphate + ADP + H(+). The catalysed reaction is N-hexadecanoylsphing-4-enine + ATP = N-(hexadecanoyl)-sphing-4-enine-1-phosphate + ADP + H(+). The enzyme catalyses N-hexanoyl-(4R)-hydroxysphinganine + ATP = N-hexanoyl-(4R)-hydroxysphinganine-1-phosphate + ADP + H(+). Its function is as follows. Catalyzes specifically the phosphorylation of ceramide to form ceramide 1-phosphate. Acts efficiently on natural and analog ceramides (C6, C8, C16 ceramides, and C8-dihydroceramide), to a lesser extent on C2-ceramide and C6-dihydroceramide, but not on other lipids, such as various sphingosines. Shows a greater preference for D-erythro isomer of ceramides. Binds phosphoinositides. This chain is Ceramide kinase (Cerk), found in Mus musculus (Mouse).